We begin with the raw amino-acid sequence, 74 residues long: MTDQPAQNGLIPPPTSEPSKAAASAETKPKKRICCACPDTKKLRDECIVEHGESACTKWIEAHKICLRAEGFNV.

The interval 1 to 30 (MTDQPAQNGLIPPPTSEPSKAAASAETKPK) is disordered. Cys34 and Cys35 together coordinate Cu cation. The CHCH domain maps to 34–74 (CCACPDTKKLRDECIVEHGESACTKWIEAHKICLRAEGFNV). 2 short sequence motifs (cx9C motif) span residues 37-47 (CPDTKKLRDEC) and 56-66 (CTKWIEAHKIC). 2 disulfide bridges follow: Cys37-Cys66 and Cys47-Cys56.

It belongs to the COX17 family.

It localises to the mitochondrion intermembrane space. Its function is as follows. Copper chaperone for cytochrome c oxidase (COX). Binds 2 copper ions and delivers them to the Cu(A) site of COX. Can complement the yeast mutant cox17. The polypeptide is Cytochrome c oxidase copper chaperone 1 (COX17-1) (Arabidopsis thaliana (Mouse-ear cress)).